The chain runs to 48 residues: Small ribosomal subunit protein uS14 (48 aa).

Cys-13, Cys-16, Cys-31, and Cys-34 together coordinate Zn(2+).

The protein belongs to the universal ribosomal protein uS14 family. Zinc-binding uS14 subfamily. Part of the 30S ribosomal subunit. It depends on Zn(2+) as a cofactor.

In terms of biological role, binds 16S rRNA, required for the assembly of 30S particles. The sequence is that of Small ribosomal subunit protein uS14 from Methanopyrus kandleri (strain AV19 / DSM 6324 / JCM 9639 / NBRC 100938).